The following is a 162-amino-acid chain: UPF0305 protein MMP0665 (162 aa).

It belongs to the UPF0305 family.

In Methanococcus maripaludis (strain DSM 14266 / JCM 13030 / NBRC 101832 / S2 / LL), this protein is UPF0305 protein MMP0665.